A 351-amino-acid chain; its full sequence is Serine protease inhibitor dipetalogastin (351 aa).

Positions 1–131 are excised as a propeptide; sequence LIKELVNMVI…AETTNAMEVL (131 aa). 6 Kazal-like domains span residues 19–69, 72–122, 131–181, 184–234, 240–289, and 297–347; these read KELK…PCDE, HDFE…ECHA, LFQG…PCDE, HDFE…ECHP, QLIL…ECKV, and GEVR…RCLP. Disulfide bonds link C25–C50, C27–C46, C35–C67, C78–C103, C80–C99, C88–C120, C137–C162, C139–C158, C147–C179, C190–C215, C192–C211, C200–C232, C246–C271, C248–C267, C256–C287, C303–C328, C305–C324, and C313–C345.

Its subcellular location is the secreted. Thrombin inhibitor. Prevents blood clotting to allow insect to feed on blood. Also functions as an inhibitor of trypsin and plasmin. This is Serine protease inhibitor dipetalogastin from Dipetalogaster maximus (Blood-sucking bug).